Here is a 1407-residue protein sequence, read N- to C-terminus: DNA-directed RNA polymerase subunit beta' (1407 aa).

Positions 70, 72, 85, and 88 each coordinate Zn(2+). Residues D458, D460, and D462 each contribute to the Mg(2+) site. Positions 814, 888, 895, and 898 each coordinate Zn(2+).

It belongs to the RNA polymerase beta' chain family. In terms of assembly, the RNAP catalytic core consists of 2 alpha, 1 beta, 1 beta' and 1 omega subunit. When a sigma factor is associated with the core the holoenzyme is formed, which can initiate transcription. Mg(2+) serves as cofactor. It depends on Zn(2+) as a cofactor.

It carries out the reaction RNA(n) + a ribonucleoside 5'-triphosphate = RNA(n+1) + diphosphate. In terms of biological role, DNA-dependent RNA polymerase catalyzes the transcription of DNA into RNA using the four ribonucleoside triphosphates as substrates. In Leptothrix cholodnii (strain ATCC 51168 / LMG 8142 / SP-6) (Leptothrix discophora (strain SP-6)), this protein is DNA-directed RNA polymerase subunit beta'.